The following is a 167-amino-acid chain: Ribosome maturation factor RimM (167 aa).

In terms of domain architecture, PRC barrel spans 94-165; the sequence is ENEFYYSDII…KIIITPMEGL (72 aa).

This sequence belongs to the RimM family. In terms of assembly, binds ribosomal protein uS19.

Its subcellular location is the cytoplasm. In terms of biological role, an accessory protein needed during the final step in the assembly of 30S ribosomal subunit, possibly for assembly of the head region. Essential for efficient processing of 16S rRNA. May be needed both before and after RbfA during the maturation of 16S rRNA. It has affinity for free ribosomal 30S subunits but not for 70S ribosomes. The sequence is that of Ribosome maturation factor RimM from Staphylococcus aureus (strain NCTC 8325 / PS 47).